Here is a 301-residue protein sequence, read N- to C-terminus: Recombination-associated protein RdgC (301 aa).

Belongs to the RdgC family.

Its subcellular location is the cytoplasm. The protein localises to the nucleoid. May be involved in recombination. The protein is Recombination-associated protein RdgC of Xanthomonas oryzae pv. oryzae (strain KACC10331 / KXO85).